We begin with the raw amino-acid sequence, 275 residues long: Large ribosomal subunit protein uL2c (275 aa).

A disordered region spans residues 223 to 255 (VVMNPVDHPHGGGEGRAPIGRSRPVTPWGRPAL).

Belongs to the universal ribosomal protein uL2 family. Part of the 50S ribosomal subunit.

It localises to the plastid. It is found in the chloroplast. This Pleurastrum terricola (Filamentous green alga) protein is Large ribosomal subunit protein uL2c (rpl2).